A 57-amino-acid chain; its full sequence is Conotoxin Cal6.39 (57 aa).

The signal sequence occupies residues 1 to 18 (MSGTTVLLLTCLFLVTMA). Disulfide bonds link cysteine 22–cysteine 36, cysteine 29–cysteine 46, and cysteine 35–cysteine 52.

Expressed by the venom duct.

It is found in the secreted. Functionally, probable neurotoxin. The polypeptide is Conotoxin Cal6.39 (Californiconus californicus (California cone)).